The primary structure comprises 565 residues: Proline--tRNA ligase (565 aa).

The protein belongs to the class-II aminoacyl-tRNA synthetase family. ProS type 1 subfamily. In terms of assembly, homodimer.

It is found in the cytoplasm. The enzyme catalyses tRNA(Pro) + L-proline + ATP = L-prolyl-tRNA(Pro) + AMP + diphosphate. Functionally, catalyzes the attachment of proline to tRNA(Pro) in a two-step reaction: proline is first activated by ATP to form Pro-AMP and then transferred to the acceptor end of tRNA(Pro). As ProRS can inadvertently accommodate and process non-cognate amino acids such as alanine and cysteine, to avoid such errors it has two additional distinct editing activities against alanine. One activity is designated as 'pretransfer' editing and involves the tRNA(Pro)-independent hydrolysis of activated Ala-AMP. The other activity is designated 'posttransfer' editing and involves deacylation of mischarged Ala-tRNA(Pro). The misacylated Cys-tRNA(Pro) is not edited by ProRS. The polypeptide is Proline--tRNA ligase (Hydrogenobaculum sp. (strain Y04AAS1)).